The primary structure comprises 174 residues: ATP-dependent protease subunit HslV (174 aa).

Residue T2 is part of the active site. The Na(+) site is built by G157, C160, and T163.

It belongs to the peptidase T1B family. HslV subfamily. A double ring-shaped homohexamer of HslV is capped on each side by a ring-shaped HslU homohexamer. The assembly of the HslU/HslV complex is dependent on binding of ATP.

Its subcellular location is the cytoplasm. It carries out the reaction ATP-dependent cleavage of peptide bonds with broad specificity.. Allosterically activated by HslU binding. In terms of biological role, protease subunit of a proteasome-like degradation complex believed to be a general protein degrading machinery. The chain is ATP-dependent protease subunit HslV from Yersinia enterocolitica serotype O:8 / biotype 1B (strain NCTC 13174 / 8081).